Consider the following 128-residue polypeptide: MGSNIVIYFSIIVIVTLNVNGVPASDLFKSVSQYHIPRSKVINKETVTKPLQFQRAICRLLQKLGEETFARLSQSELEAKQLDLIKTCYQANSFGDNENQGHMQRMDRNYYGWMDFGKRAIEDVDYEY.

An N-terminal signal peptide occupies residues 1–22 (MGSNIVIYFSIIVIVTLNVNGV). A propeptide spanning residues 23 to 108 (PASDLFKSVS…NQGHMQRMDR (86 aa)) is cleaved from the precursor. A sulfotyrosine mark is found at tyrosine 110 and tyrosine 111. At phenylalanine 116 the chain carries Phenylalanine amide. Residues 120–128 (AIEDVDYEY) constitute a propeptide that is removed on maturation.

It belongs to the gastrin/cholecystokinin family. As to expression, expressed in both the gut and the neural ganglion.

It is found in the secreted. This is Cionin from Ciona intestinalis (Transparent sea squirt).